Here is a 217-residue protein sequence, read N- to C-terminus: Large ribosomal subunit protein uL3 (217 aa).

The interval 129 to 161 (SRGPMSHGSKNHRAPGSTGAGTTPGRIYPGKRM) is disordered. Low complexity predominate over residues 142 to 153 (APGSTGAGTTPG).

It belongs to the universal ribosomal protein uL3 family. As to quaternary structure, part of the 50S ribosomal subunit. Forms a cluster with proteins L14 and L19.

One of the primary rRNA binding proteins, it binds directly near the 3'-end of the 23S rRNA, where it nucleates assembly of the 50S subunit. This is Large ribosomal subunit protein uL3 from Prochlorococcus marinus subsp. pastoris (strain CCMP1986 / NIES-2087 / MED4).